The chain runs to 213 residues: Pyridoxine/pyridoxamine 5'-phosphate oxidase (213 aa).

Residues 8 to 11 (RREY) and Lys66 contribute to the substrate site. Residues 61 to 66 (RIVLLK), 76 to 77 (YT), Arg82, Lys83, and Gln105 contribute to the FMN site. Substrate is bound by residues Tyr123, Arg127, and Ser131. FMN is bound by residues 140–141 (QS) and Trp185. 191 to 193 (RLH) is a substrate binding site. Arg195 is a binding site for FMN.

The protein belongs to the pyridoxamine 5'-phosphate oxidase family. Homodimer. FMN serves as cofactor.

The catalysed reaction is pyridoxamine 5'-phosphate + O2 + H2O = pyridoxal 5'-phosphate + H2O2 + NH4(+). It carries out the reaction pyridoxine 5'-phosphate + O2 = pyridoxal 5'-phosphate + H2O2. Its pathway is cofactor metabolism; pyridoxal 5'-phosphate salvage; pyridoxal 5'-phosphate from pyridoxamine 5'-phosphate: step 1/1. It functions in the pathway cofactor metabolism; pyridoxal 5'-phosphate salvage; pyridoxal 5'-phosphate from pyridoxine 5'-phosphate: step 1/1. Its function is as follows. Catalyzes the oxidation of either pyridoxine 5'-phosphate (PNP) or pyridoxamine 5'-phosphate (PMP) into pyridoxal 5'-phosphate (PLP). This chain is Pyridoxine/pyridoxamine 5'-phosphate oxidase, found in Pseudoalteromonas atlantica (strain T6c / ATCC BAA-1087).